We begin with the raw amino-acid sequence, 388 residues long: Phosphoglycerate kinase (388 aa).

Substrate contacts are provided by residues 21–23, arginine 36, 59–62, arginine 114, and arginine 147; these read DLN and HLGR. ATP is bound by residues lysine 198, glutamate 315, and 341–344; that span reads GGDT.

This sequence belongs to the phosphoglycerate kinase family. In terms of assembly, monomer.

Its subcellular location is the cytoplasm. The catalysed reaction is (2R)-3-phosphoglycerate + ATP = (2R)-3-phospho-glyceroyl phosphate + ADP. It functions in the pathway carbohydrate degradation; glycolysis; pyruvate from D-glyceraldehyde 3-phosphate: step 2/5. The protein is Phosphoglycerate kinase of Hahella chejuensis (strain KCTC 2396).